A 186-amino-acid chain; its full sequence is Phosphoheptose isomerase 1 (186 aa).

Positions 33-186 constitute an SIS domain; it reads LCECLKKGGK…TLCQIIDESF (154 aa). Position 48 to 50 (48 to 50) interacts with substrate; that stretch reads NGG. Residues H57 and E61 each coordinate Zn(2+). Residues E61, 90–91, 116–118, S121, and Q168 each bind substrate; these read ND and STS. Zn(2+) is bound by residues Q168 and H176.

Belongs to the SIS family. GmhA subfamily. Homotetramer. Zn(2+) is required as a cofactor.

Its subcellular location is the cytoplasm. It carries out the reaction 2 D-sedoheptulose 7-phosphate = D-glycero-alpha-D-manno-heptose 7-phosphate + D-glycero-beta-D-manno-heptose 7-phosphate. It participates in carbohydrate biosynthesis; D-glycero-D-manno-heptose 7-phosphate biosynthesis; D-glycero-alpha-D-manno-heptose 7-phosphate and D-glycero-beta-D-manno-heptose 7-phosphate from sedoheptulose 7-phosphate: step 1/1. The protein operates within bacterial outer membrane biogenesis; LOS core biosynthesis. Its function is as follows. Catalyzes the isomerization of sedoheptulose 7-phosphate in D-glycero-D-manno-heptose 7-phosphate. This is Phosphoheptose isomerase 1 (gmhA1) from Campylobacter jejuni subsp. jejuni serotype O:2 (strain ATCC 700819 / NCTC 11168).